Here is a 157-residue protein sequence, read N- to C-terminus: MGVISYDMEIKSSLSAAKLFKAFVLDVGTLINKALPNVIKSVEILQGDGGAGTIKLVHFGEGGPVPSVKHHVEELDKDNMSYKYSIVDGEALMPGLQSISYVIKIEPSGHGSVCKHNTTFHFKAGSNINEDEIKAGKERAAEMIKAVEAYVQANPDY.

N-linked (GlcNAc...) asparagine glycosylation is found at asparagine 79 and asparagine 117.

It belongs to the BetVI family.

The sequence is that of Probable intracellular pathogenesis-related protein T1 (PCKR3) from Catharanthus roseus (Madagascar periwinkle).